The sequence spans 445 residues: RING finger and transmembrane domain-containing protein 2 (445 aa).

Residues 1–183 are Extracellular-facing; the sequence is MWLLAAHQVL…LLAKLCFQHK (183 aa). The segment at 12–41 is disordered; the sequence is KMQRRHSSNTDNIPPERSRSQALSPEASVD. The chain crosses the membrane as a helical span at residues 184–203; the sequence is LGIAVCIGMASTFAYANSTL. At 204 to 215 the chain is on the cytoplasmic side; the sequence is REQVSLKEKRSV. Residues 216–236 form a helical membrane-spanning segment; sequence LVILWILAFLAGNTMYVLYTF. Over 237–256 the chain is Extracellular; that stretch reads SSQQLYSSLIFLKPNLETLD. Residues 257-277 traverse the membrane as a helical segment; that stretch reads FFDLLWIVGIADFVLKYITIA. At 278 to 330 the chain is on the cytoplasmic side; the sequence is LKCLIVALPKIILAVKSKGKFYLVIEELSQLFRSLVPIQLWYKYIMGDDSSNS. The chain crosses the membrane as a helical span at residues 331 to 351; the sequence is YFLGGVLIVLYSLCKSFDICG. Residues 352 to 445 lie on the Extracellular side of the membrane; it reads RVGGLRKALK…GATSAHLQVY (94 aa). The RING-type zinc finger occupies 385–423; the sequence is CAICQAEFRDPMILLCQHVFCEECLCLWLDRERTCPLCR.

The protein localises to the membrane. E3 ubiquitin-protein ligase that negatively regulates IL3-dependent cellular responses through IL3RA ubiquitination and degradation by the proteasome, having an anti-inflammatory effect. This chain is RING finger and transmembrane domain-containing protein 2 (Rnft2), found in Mus musculus (Mouse).